The chain runs to 143 residues: Hemoglobin subunit alpha (143 aa).

Residues 3-143 (KLSGEDKANV…TMRLCISKYR (141 aa)) form the Globin domain. An O2-binding site is contributed by His60. His89 is a heme b binding site.

The protein belongs to the globin family. As to quaternary structure, heterotetramer of two alpha chains and two beta chains. As to expression, red blood cells.

Involved in oxygen transport from the lung to the various peripheral tissues. The sequence is that of Hemoglobin subunit alpha (HBA) from Ambystoma mexicanum (Axolotl).